Consider the following 277-residue polypeptide: 2-dehydro-3-deoxyphosphooctonate aldolase (277 aa).

The protein belongs to the KdsA family.

The protein resides in the cytoplasm. It carries out the reaction D-arabinose 5-phosphate + phosphoenolpyruvate + H2O = 3-deoxy-alpha-D-manno-2-octulosonate-8-phosphate + phosphate. Its pathway is carbohydrate biosynthesis; 3-deoxy-D-manno-octulosonate biosynthesis; 3-deoxy-D-manno-octulosonate from D-ribulose 5-phosphate: step 2/3. The protein operates within bacterial outer membrane biogenesis; lipopolysaccharide biosynthesis. This is 2-dehydro-3-deoxyphosphooctonate aldolase from Brucella abortus (strain S19).